The primary structure comprises 139 residues: MAVKIRLKRMGAKKRPFYRVVIADSRSPRDGRFIETVGTYNPISQPAEIKLDEEKILSWLGNGAQPSDTVRNLLSNAGILAKYNESKSGKKPAKKATTKEASAKKPTDKNTVAEIKAYLDAQGTAYTSSAKKADLLALV.

Residues 85–108 form a disordered region; the sequence is ESKSGKKPAKKATTKEASAKKPTD. A compositionally biased stretch (basic and acidic residues) spans 97-108; sequence TTKEASAKKPTD.

This sequence belongs to the bacterial ribosomal protein bS16 family.

The polypeptide is Small ribosomal subunit protein bS16 (Leuconostoc mesenteroides subsp. mesenteroides (strain ATCC 8293 / DSM 20343 / BCRC 11652 / CCM 1803 / JCM 6124 / NCDO 523 / NBRC 100496 / NCIMB 8023 / NCTC 12954 / NRRL B-1118 / 37Y)).